Reading from the N-terminus, the 337-residue chain is Centromere protein N (337 aa).

Phosphoserine is present on residues S226 and S233.

The protein belongs to the CENP-N/CHL4 family. As to quaternary structure, component of the CENPA-NAC complex, at least composed of CENPA, CENPC, CENPH, CENPM, CENPN, CENPT and CENPU. The CENPA-NAC complex interacts with the CENPA-CAD complex, composed of CENPI, CENPK, CENPL, CENPO, CENPP, CENPQ, CENPR and CENPS. Interacts directly with CENPA. Identified in a centromere complex containing histones H2A, H2B and H4, and at least CENPA, CENPB, CENPC, CENPT, CENPN, HJURP, SUPT16H, SSRP1 and RSF1.

The protein localises to the nucleus. It is found in the chromosome. The protein resides in the centromere. It localises to the kinetochore. In terms of biological role, component of the CENPA-NAC (nucleosome-associated) complex, a complex that plays a central role in assembly of kinetochore proteins, mitotic progression and chromosome segregation. The CENPA-NAC complex recruits the CENPA-CAD (nucleosome distal) complex and may be involved in incorporation of newly synthesized CENPA into centromeres. CENPN is the first protein to bind specifically to CENPA nucleosomes and the direct binding of CENPA nucleosomes by CENPN is required for centromere assembly. Required for chromosome congression and efficiently align the chromosomes on a metaphase plate. The polypeptide is Centromere protein N (Cenpn) (Mus musculus (Mouse)).